A 510-amino-acid chain; its full sequence is D-alanine--D-alanyl carrier protein ligase (510 aa).

Residue 157–158 (TS) coordinates ATP. D-alanine is bound at residue Asp-202. 297–302 (NTYGPT) lines the ATP pocket. Val-306 is a binding site for D-alanine. ATP-binding residues include Asp-389 and Lys-498. Lys-498 lines the D-alanine pocket.

Belongs to the ATP-dependent AMP-binding enzyme family. DltA subfamily.

It is found in the cytoplasm. The enzyme catalyses holo-[D-alanyl-carrier protein] + D-alanine + ATP = D-alanyl-[D-alanyl-carrier protein] + AMP + diphosphate. It participates in cell wall biogenesis; lipoteichoic acid biosynthesis. Functionally, catalyzes the first step in the D-alanylation of lipoteichoic acid (LTA), the activation of D-alanine and its transfer onto the D-alanyl carrier protein (Dcp) DltC. In an ATP-dependent two-step reaction, forms a high energy D-alanyl-AMP intermediate, followed by transfer of the D-alanyl residue as a thiol ester to the phosphopantheinyl prosthetic group of the Dcp. D-alanylation of LTA plays an important role in modulating the properties of the cell wall in Gram-positive bacteria, influencing the net charge of the cell wall. This Listeria monocytogenes serovar 1/2a (strain ATCC BAA-679 / EGD-e) protein is D-alanine--D-alanyl carrier protein ligase.